A 128-amino-acid chain; its full sequence is Large ribosomal subunit protein uL22 (128 aa).

Positions 1–22 (MARGHRSQIKRERNANKDTRPS) are disordered. Positions 9-21 (IKRERNANKDTRP) are enriched in basic and acidic residues.

This sequence belongs to the universal ribosomal protein uL22 family. In terms of assembly, part of the 50S ribosomal subunit.

In terms of biological role, this protein binds specifically to 23S rRNA; its binding is stimulated by other ribosomal proteins, e.g. L4, L17, and L20. It is important during the early stages of 50S assembly. It makes multiple contacts with different domains of the 23S rRNA in the assembled 50S subunit and ribosome. Its function is as follows. The globular domain of the protein is located near the polypeptide exit tunnel on the outside of the subunit, while an extended beta-hairpin is found that lines the wall of the exit tunnel in the center of the 70S ribosome. This Lachnoclostridium phytofermentans (strain ATCC 700394 / DSM 18823 / ISDg) (Clostridium phytofermentans) protein is Large ribosomal subunit protein uL22.